We begin with the raw amino-acid sequence, 390 residues long: Chorismate synthase (390 aa).

Arginine 39 and arginine 45 together coordinate NADP(+). Residues 132 to 134 (RSS), 253 to 254 (NA), glycine 298, 313 to 317 (KPIPT), and arginine 339 each bind FMN.

The protein belongs to the chorismate synthase family. As to quaternary structure, homotetramer. Requires FMNH2 as cofactor.

The enzyme catalyses 5-O-(1-carboxyvinyl)-3-phosphoshikimate = chorismate + phosphate. It functions in the pathway metabolic intermediate biosynthesis; chorismate biosynthesis; chorismate from D-erythrose 4-phosphate and phosphoenolpyruvate: step 7/7. Catalyzes the anti-1,4-elimination of the C-3 phosphate and the C-6 proR hydrogen from 5-enolpyruvylshikimate-3-phosphate (EPSP) to yield chorismate, which is the branch point compound that serves as the starting substrate for the three terminal pathways of aromatic amino acid biosynthesis. This reaction introduces a second double bond into the aromatic ring system. This is Chorismate synthase from Bacillus velezensis (strain DSM 23117 / BGSC 10A6 / LMG 26770 / FZB42) (Bacillus amyloliquefaciens subsp. plantarum).